The chain runs to 78 residues: Ferredoxin 7Fe (78 aa).

2 4Fe-4S ferredoxin-type domains span residues alanine 2 to glycine 29 and aspartate 31 to phenylalanine 60. [3Fe-4S] cluster contacts are provided by cysteine 9 and cysteine 17. [4Fe-4S] cluster contacts are provided by cysteine 21, cysteine 40, cysteine 43, and cysteine 46. Cysteine 50 provides a ligand contact to [3Fe-4S] cluster.

Monomer. [4Fe-4S] cluster serves as cofactor. [3Fe-4S] cluster is required as a cofactor.

In Hydrogenibacillus schlegelii (Bacillus schlegelii), this protein is Ferredoxin 7Fe (fdxA).